A 426-amino-acid polypeptide reads, in one-letter code: Enolase (426 aa).

Q163 contributes to the (2R)-2-phosphoglycerate binding site. The active-site Proton donor is the E205. Mg(2+)-binding residues include D242, E283, and D310. The (2R)-2-phosphoglycerate site is built by K335, R364, S365, and K386. K335 functions as the Proton acceptor in the catalytic mechanism.

It belongs to the enolase family. Mg(2+) is required as a cofactor.

It is found in the cytoplasm. Its subcellular location is the secreted. The protein resides in the cell surface. The enzyme catalyses (2R)-2-phosphoglycerate = phosphoenolpyruvate + H2O. The protein operates within carbohydrate degradation; glycolysis; pyruvate from D-glyceraldehyde 3-phosphate: step 4/5. Catalyzes the reversible conversion of 2-phosphoglycerate (2-PG) into phosphoenolpyruvate (PEP). It is essential for the degradation of carbohydrates via glycolysis. The chain is Enolase from Arthrobacter sp. (strain FB24).